Consider the following 87-residue polypeptide: Defensin-like protein 100 (87 aa).

An N-terminal signal peptide occupies residues Met-1 to Gly-29. 4 disulfides stabilise this stretch: Cys-31/Cys-79, Cys-38/Cys-64, Cys-44/Cys-76, and Cys-48/Cys-78.

Belongs to the DEFL family.

The protein resides in the secreted. In Arabidopsis thaliana (Mouse-ear cress), this protein is Defensin-like protein 100.